The chain runs to 211 residues: N-(5'-phosphoribosyl)anthranilate isomerase (211 aa).

It belongs to the TrpF family.

The catalysed reaction is N-(5-phospho-beta-D-ribosyl)anthranilate = 1-(2-carboxyphenylamino)-1-deoxy-D-ribulose 5-phosphate. It participates in amino-acid biosynthesis; L-tryptophan biosynthesis; L-tryptophan from chorismate: step 3/5. The chain is N-(5'-phosphoribosyl)anthranilate isomerase from Zymomonas mobilis subsp. pomaceae (strain ATCC 29192 / DSM 22645 / JCM 10191 / CCUG 17912 / NBRC 13757 / NCIMB 11200 / NRRL B-4491 / Barker I).